Reading from the N-terminus, the 475-residue chain is Chromosomal replication initiator protein DnaA (475 aa).

The interval 1 to 73 is domain I, interacts with DnaA modulators; it reads MSDIEQERWS…LACWQAELPD (73 aa). Positions 73 to 131 are domain II; sequence DVHRIDLMVRSAMRCAAPAKEAPAADPRRPEHGDGRASTELKMVATAPASANHDALGGS. The interval 132–354 is domain III, AAA+ region; the sequence is PLDPRLTFAS…GAINRLLAHS (223 aa). Gly-179, Gly-181, Lys-182, and Thr-183 together coordinate ATP. Residues 355–475 are domain IV, binds dsDNA; it reads KLNAQPVTLE…VELLKRQLQE (121 aa).

This sequence belongs to the DnaA family. Oligomerizes as a right-handed, spiral filament on DNA at oriC.

The protein localises to the cytoplasm. Functionally, plays an essential role in the initiation and regulation of chromosomal replication. ATP-DnaA binds to the origin of replication (oriC) to initiate formation of the DNA replication initiation complex once per cell cycle. Binds the DnaA box (a 9 base pair repeat at the origin) and separates the double-stranded (ds)DNA. Forms a right-handed helical filament on oriC DNA; dsDNA binds to the exterior of the filament while single-stranded (ss)DNA is stabiized in the filament's interior. The ATP-DnaA-oriC complex binds and stabilizes one strand of the AT-rich DNA unwinding element (DUE), permitting loading of DNA polymerase. After initiation quickly degrades to an ADP-DnaA complex that is not apt for DNA replication. Binds acidic phospholipids. In Nitrobacter hamburgensis (strain DSM 10229 / NCIMB 13809 / X14), this protein is Chromosomal replication initiator protein DnaA.